The primary structure comprises 401 residues: Heat shock transcription factor, Y-linked (401 aa).

The segment covering 1-11 has biased composition (polar residues); it reads MAHVSSETQDV. The segment at 1–30 is disordered; sequence MAHVSSETQDVSPKDELTASEASTRSPLCE. A DNA-binding region spans residues 76–194; that stretch reads LSLNFPRKLW…PQLLVRVKRR (119 aa).

This sequence belongs to the HSF family. As to expression, testis-specific. Present in Sertoli cells and spermatogenic cells (at protein level).

It localises to the nucleus. Its subcellular location is the cytoplasm. The chain is Heat shock transcription factor, Y-linked (HSFY1) from Homo sapiens (Human).